The sequence spans 107 residues: Essential MCU regulator, mitochondrial (107 aa).

Residues 1–52 constitute a mitochondrion transit peptide; it reads MASGAARWLVLAPVRSGALRSGPSLRKDGDVSAAWSGSGRSLVPSRSVIVTR. The interaction with MAIP1 stretch occupies residues 1 to 52; it reads MASGAARWLVLAPVRSGALRSGPSLRKDGDVSAAWSGSGRSLVPSRSVIVTR. The Mitochondrial matrix portion of the chain corresponds to 54–65; that stretch reads GAILPKPVKMSF. Residues 66 to 85 traverse the membrane as a helical segment; the sequence is GLLRVFSIVIPFLYVGTLIS. Residues 81-85 carry the GXXXX[G/A/S] motif; sequence GTLIS. Topologically, residues 86 to 107 are mitochondrial intermembrane; that stretch reads KNFAALLEEHDIFVPEDDDDDD.

The protein belongs to the SMDT1/EMRE family. In terms of assembly, component of the uniplex complex, composed of MCU, EMRE/SMDT1, MICU1 and MICU2 (or MICU3) in a 4:4:1:1 stoichiometry. The number of EMRE/SMDT1 molecules is hovewer variable, ranging from 1 to 4 copies per uniplex complex, leading to uniplex complexes with distinct gatekeeping profiles. Interacts (via its C-terminal poly-Asp tail) with MCUR1; the interaction is direct. Unprocessed form interacts (via transit peptide) with MAIP1. Undergoes proteolytic degradation in neurons: degraded by AFG3L2 and SPG7 before SMDT1/EMRE assembly with the uniporter complex, limiting the availability of SMDT1/EMRE for MCU assembly and promoting efficient assembly of gatekeeper subunits with MCU.

It localises to the mitochondrion inner membrane. Functionally, essential regulatory subunit of the mitochondrial calcium uniporter complex (uniplex), a complex that mediates calcium uptake into mitochondria. Required to bridge the calcium-sensing proteins MICU1 with the calcium-conducting subunit MCU. Acts by mediating activation of MCU and retention of MICU1 to the MCU pore, in order to ensure tight regulation of the uniplex complex and appropriate responses to intracellular calcium signaling. The polypeptide is Essential MCU regulator, mitochondrial (Homo sapiens (Human)).